The sequence spans 281 residues: Bifunctional protein FolD (281 aa).

Residues 165–167, Thr192, and Val233 contribute to the NADP(+) site; that span reads GRG.

Belongs to the tetrahydrofolate dehydrogenase/cyclohydrolase family. Homodimer.

The catalysed reaction is (6R)-5,10-methylene-5,6,7,8-tetrahydrofolate + NADP(+) = (6R)-5,10-methenyltetrahydrofolate + NADPH. The enzyme catalyses (6R)-5,10-methenyltetrahydrofolate + H2O = (6R)-10-formyltetrahydrofolate + H(+). Its pathway is one-carbon metabolism; tetrahydrofolate interconversion. In terms of biological role, catalyzes the oxidation of 5,10-methylenetetrahydrofolate to 5,10-methenyltetrahydrofolate and then the hydrolysis of 5,10-methenyltetrahydrofolate to 10-formyltetrahydrofolate. The polypeptide is Bifunctional protein FolD (Mycobacteroides abscessus (strain ATCC 19977 / DSM 44196 / CCUG 20993 / CIP 104536 / JCM 13569 / NCTC 13031 / TMC 1543 / L948) (Mycobacterium abscessus)).